A 122-amino-acid polypeptide reads, in one-letter code: Photosystem II extrinsic protein U (122 aa).

The signal sequence occupies residues 1 to 26 (MKTIVRLFAILMVLISSVGFVGSAVA).

It belongs to the PsbU family. PSII is composed of 1 copy each of membrane proteins PsbA, PsbB, PsbC, PsbD, PsbE, PsbF, PsbH, PsbI, PsbJ, PsbK, PsbL, PsbM, PsbT, PsbX, PsbY, PsbZ, Psb30/Ycf12, peripheral proteins PsbO, CyanoQ (PsbQ), PsbU, PsbV and a large number of cofactors. It forms dimeric complexes.

The protein localises to the cellular thylakoid membrane. Functionally, one of the extrinsic, lumenal subunits of photosystem II (PSII). PSII is a light-driven water plastoquinone oxidoreductase, using light energy to abstract electrons from H(2)O, generating a proton gradient subsequently used for ATP formation. The extrinsic proteins stabilize the structure of photosystem II oxygen-evolving complex (OEC), the ion environment of oxygen evolution and protect the OEC against heat-induced inactivation. In Crocosphaera subtropica (strain ATCC 51142 / BH68) (Cyanothece sp. (strain ATCC 51142)), this protein is Photosystem II extrinsic protein U.